The sequence spans 507 residues: UDP-N-acetylhexosamine pyrophosphorylase-like protein 1 (507 aa).

A Substrate binding motif is present at residues 111-114; it reads LAGG. UTP-binding positions include 111–114, Lys-125, Gln-199, and Gly-225; that span reads LAGG. Position 226 (Asn-226) interacts with substrate. UTP is bound at residue Asp-256. A Substrate binding motif is present at residues 306-307; that stretch reads EY. UTP is bound at residue Lys-380. Lys-410 provides a ligand contact to substrate.

This sequence belongs to the UDPGP type 1 family.

The polypeptide is UDP-N-acetylhexosamine pyrophosphorylase-like protein 1 (Uap1l1) (Mus musculus (Mouse)).